The primary structure comprises 153 residues: Large ribosomal subunit protein uL22 (153 aa).

This sequence belongs to the universal ribosomal protein uL22 family. As to quaternary structure, part of the 50S ribosomal subunit.

Functionally, this protein binds specifically to 23S rRNA. It makes multiple contacts with different domains of the 23S rRNA in the assembled 50S subunit and ribosome. Its function is as follows. The globular domain of the protein is located near the polypeptide exit tunnel on the outside of the subunit, while an extended beta-hairpin is found that lines the wall of the exit tunnel in the center of the 70S ribosome. This chain is Large ribosomal subunit protein uL22, found in Methanoculleus marisnigri (strain ATCC 35101 / DSM 1498 / JR1).